Here is a 361-residue protein sequence, read N- to C-terminus: Peptidyl-prolyl cis-trans isomerase CYP40 (361 aa).

The region spanning 7–172 is the PPIase cyclophilin-type domain; it reads FMDISIGGEL…QDVVIHDCGE (166 aa). TPR repeat units follow at residues 212-245 and 298-331; these read VDFV…LDIC and VKAL…EPND.

It belongs to the cyclophilin-type PPIase family. Expressed at low levels in seedlings, roots, shoots, leaves, stems, inflorescences, flowers and siliques, with highest levels dividing tissues.

Its subcellular location is the cytoplasm. It carries out the reaction [protein]-peptidylproline (omega=180) = [protein]-peptidylproline (omega=0). Binds cyclosporin A (CsA). CsA mediates some of its effects via an inhibitory action on PPIase. Its function is as follows. PPIases accelerate the folding of proteins. It catalyzes the cis-trans isomerization of proline imidic peptide bonds in oligopeptides. Involved in promoting the expression of the juvenile phase of vegetative development, and, to a lower extent, in regulating the positioning of floral buds, floral morphogenesis and the expression of HSPs. Collaboratively with RBL and ULT1, influences floral meristem (FM) determinacy in an AGAMOUS and SUPERMAN-dependent manner, thus contributing to the floral developmental homeostasis. The protein is Peptidyl-prolyl cis-trans isomerase CYP40 of Arabidopsis thaliana (Mouse-ear cress).